Reading from the N-terminus, the 78-residue chain is Small ribosomal subunit protein uS17 (78 aa).

This sequence belongs to the universal ribosomal protein uS17 family. As to quaternary structure, part of the 30S ribosomal subunit.

One of the primary rRNA binding proteins, it binds specifically to the 5'-end of 16S ribosomal RNA. This is Small ribosomal subunit protein uS17 from Pelagibacter ubique (strain HTCC1062).